Here is a 181-residue protein sequence, read N- to C-terminus: Negative modulator of initiation of replication (181 aa).

3 interaction with DNA regions span residues Ala87 to Val88, Arg116 to Tyr120, and Asn150 to Lys156.

It belongs to the SeqA family. As to quaternary structure, homodimer. Polymerizes to form helical filaments.

The protein resides in the cytoplasm. Functionally, negative regulator of replication initiation, which contributes to regulation of DNA replication and ensures that replication initiation occurs exactly once per chromosome per cell cycle. Binds to pairs of hemimethylated GATC sequences in the oriC region, thus preventing assembly of replication proteins and re-initiation at newly replicated origins. Repression is relieved when the region becomes fully methylated. This chain is Negative modulator of initiation of replication, found in Shigella dysenteriae serotype 1 (strain Sd197).